The chain runs to 332 residues: Sphingolipid delta(4)-desaturase DES1-like (332 aa).

3 helical membrane passes run 55–75 (PWAF…AAIL), 83–103 (ILSI…LAIH), and 119–139 (CLGI…FQKY). The short motif at 103–107 (HELSH) is the Histidine box-1 element. Positions 140 to 144 (HLEHH) match the Histidine box-2 motif. The next 3 membrane-spanning stretches (helical) occupy residues 164 to 184 (LVTN…FYAL), 197 to 217 (WEFI…LFFG), and 222 to 242 (AYLI…GHFI). The Histidine box-3 signature appears at 271–275 (HNEHH).

The protein belongs to the fatty acid desaturase type 1 family. DEGS subfamily. In terms of tissue distribution, specifically expressed in flowers.

It is found in the endoplasmic reticulum membrane. The enzyme catalyses an N-acylsphinganine + 2 Fe(II)-[cytochrome b5] + O2 + 2 H(+) = an N-acylsphing-4-enine + 2 Fe(III)-[cytochrome b5] + 2 H2O. In terms of biological role, sphingolipid-delta-4-desaturase required for the biosynthesis of delta-4-unsaturated sphingolipids and derivatives. May be required for the biosynthesis of glucosylceramides. The sequence is that of Sphingolipid delta(4)-desaturase DES1-like from Arabidopsis thaliana (Mouse-ear cress).